A 408-amino-acid chain; its full sequence is Cytotoxic granule-associated RNA binding protein tiar-1 (408 aa).

RRM domains follow at residues R46–E121, F135–R213, and T241–T312.

In terms of tissue distribution, expressed in the germline and also in somatic tissues. Expressed in Ggonads and oocytes. Expression is slightly reduced in the most proximal oocytes, especially the -1 oocyte. Aggregates mostly in the head neurons, muscles, intestine, vulval and hypodermal cells during heat shock. Expressed only in the intestine as a response to heat shock, starvation and dietary restriction.

It localises to the cytoplasm. The protein localises to the nucleus. Its subcellular location is the stress granule. Acts downstream of ced-9 in the induction of germline apoptosis under different stress conditions including starvation, osmotic, oxidative, heat shock and UV stress. Plays a role in the formation of stress granules in response to heat shock and oxidative stress but not in response to osmotic stress. Required for the formation of stress granules in the core gonad but may not play a critical role in this process in the oocytes. Plays an important role in the formation of stress granules in the embryo. Protects female germ cells and embryos from heat shock. This chain is Cytotoxic granule-associated RNA binding protein tiar-1, found in Caenorhabditis elegans.